We begin with the raw amino-acid sequence, 153 residues long: Large ribosomal subunit protein uL22 (153 aa).

It belongs to the universal ribosomal protein uL22 family. As to quaternary structure, part of the 50S ribosomal subunit.

In terms of biological role, this protein binds specifically to 23S rRNA. It makes multiple contacts with different domains of the 23S rRNA in the assembled 50S subunit and ribosome. The globular domain of the protein is located near the polypeptide exit tunnel on the outside of the subunit, while an extended beta-hairpin is found that lines the wall of the exit tunnel in the center of the 70S ribosome. The polypeptide is Large ribosomal subunit protein uL22 (Methanococcus aeolicus (strain ATCC BAA-1280 / DSM 17508 / OCM 812 / Nankai-3)).